A 330-amino-acid chain; its full sequence is Ketol-acid reductoisomerase (NADP(+)) (330 aa).

Positions 1 to 181 (MNAYYEQDAD…GGTKAGVIET (181 aa)) constitute a KARI N-terminal Rossmann domain. NADP(+)-binding positions include 24–27 (YGSQ), Arg47, Ser50, Ser52, and 82–85 (DQYQ). His107 is a catalytic residue. Gly133 serves as a coordination point for NADP(+). A KARI C-terminal knotted domain is found at 182-327 (TFKNETETDL…SKLRDMMSWL (146 aa)). Mg(2+)-binding residues include Asp190, Glu194, Glu226, and Glu230. Substrate is bound at residue Ser251.

The protein belongs to the ketol-acid reductoisomerase family. Requires Mg(2+) as cofactor.

The catalysed reaction is (2R)-2,3-dihydroxy-3-methylbutanoate + NADP(+) = (2S)-2-acetolactate + NADPH + H(+). It catalyses the reaction (2R,3R)-2,3-dihydroxy-3-methylpentanoate + NADP(+) = (S)-2-ethyl-2-hydroxy-3-oxobutanoate + NADPH + H(+). It participates in amino-acid biosynthesis; L-isoleucine biosynthesis; L-isoleucine from 2-oxobutanoate: step 2/4. It functions in the pathway amino-acid biosynthesis; L-valine biosynthesis; L-valine from pyruvate: step 2/4. Functionally, involved in the biosynthesis of branched-chain amino acids (BCAA). Catalyzes an alkyl-migration followed by a ketol-acid reduction of (S)-2-acetolactate (S2AL) to yield (R)-2,3-dihydroxy-isovalerate. In the isomerase reaction, S2AL is rearranged via a Mg-dependent methyl migration to produce 3-hydroxy-3-methyl-2-ketobutyrate (HMKB). In the reductase reaction, this 2-ketoacid undergoes a metal-dependent reduction by NADPH to yield (R)-2,3-dihydroxy-isovalerate. The chain is Ketol-acid reductoisomerase (NADP(+)) from Chlorobium limicola (strain DSM 245 / NBRC 103803 / 6330).